We begin with the raw amino-acid sequence, 173 residues long: Mesencephalic astrocyte-derived neurotrophic factor homolog (173 aa).

The first 22 residues, 1–22 (MNTSHIVLMICFIVGVGQTALA), serve as a signal peptide directing secretion. Intrachain disulfides connect Cys-28/Cys-114, Cys-31/Cys-103, Cys-61/Cys-72, and Cys-148/Cys-151.

The protein belongs to the ARMET family.

The protein localises to the secreted. Functionally, required during the maturation of the embryonic nervous system for maintenance of neuronal and cuticular connectivity. Essential for maintenance of dopaminergic neurons and dopamine levels. This is Mesencephalic astrocyte-derived neurotrophic factor homolog from Drosophila virilis (Fruit fly).